An 87-amino-acid chain; its full sequence is Cell division topological specificity factor (87 aa).

It belongs to the MinE family.

In terms of biological role, prevents the cell division inhibition by proteins MinC and MinD at internal division sites while permitting inhibition at polar sites. This ensures cell division at the proper site by restricting the formation of a division septum at the midpoint of the long axis of the cell. The sequence is that of Cell division topological specificity factor from Neisseria gonorrhoeae (strain ATCC 700825 / FA 1090).